The sequence spans 85 residues: Small ribosomal subunit protein bS20 (85 aa).

Residues 1–24 (MANIKSAIKRAKLSEERRSHNASI) are disordered.

Belongs to the bacterial ribosomal protein bS20 family.

Functionally, binds directly to 16S ribosomal RNA. The polypeptide is Small ribosomal subunit protein bS20 (Bacillus mycoides (strain KBAB4) (Bacillus weihenstephanensis)).